The chain runs to 1160 residues: GPI inositol-deacylase (1160 aa).

The disordered stretch occupies residues 1–92 (MHRRSSGSPV…DPRSSSAAMP (92 aa)). The segment covering 57 to 92 (GASTPRSRNSSTWRMPSSATTTLLPPDPRSSSAAMP) has biased composition (polar residues). The N-linked (GlcNAc...) asparagine glycan is linked to Asn65. The helical transmembrane segment at 120–140 (PCSILTALTSLLASLFLCAIL) threads the bilayer. Ser307 is an active-site residue. A run of 2 helical transmembrane segments spans residues 786–806 (LVMR…ALVL) and 832–852 (SSLP…ATSS). A glycan (N-linked (GlcNAc...) asparagine) is linked at Asn866. The next 2 membrane-spanning stretches (helical) occupy residues 886 to 906 (AFFW…CVIL) and 973 to 993 (ILLL…VACI). A glycan (N-linked (GlcNAc...) asparagine) is linked at Asn1019. Helical transmembrane passes span 1023–1043 (SIFI…LVWA), 1060–1080 (VLSI…TMIP), 1092–1112 (LILF…AYLL), and 1115–1135 (LANI…GFSV).

This sequence belongs to the GPI inositol-deacylase family.

The protein localises to the endoplasmic reticulum membrane. Involved in inositol deacylation of GPI-anchored proteins which plays important roles in the quality control and ER-associated degradation of GPI-anchored proteins. The sequence is that of GPI inositol-deacylase (bst1) from Aspergillus terreus (strain NIH 2624 / FGSC A1156).